A 218-amino-acid chain; its full sequence is Large ribosomal subunit protein eL14 (218 aa).

Lys-79 carries the N6-acetyllysine modification. Lys-85 carries the post-translational modification N6-acetyllysine; alternate. At Lys-85 the chain carries N6-succinyllysine; alternate. A Glycyl lysine isopeptide (Lys-Gly) (interchain with G-Cter in SUMO2) cross-link involves residue Lys-124. At Ser-139 the chain carries Phosphoserine. Positions 159–218 are disordered; sequence VPAKKATAAGKKAAAQKAPAQKAPAQKAAGQKAAQPPKAQKGQKPPAQKAPAPKASGKKA. Tandem repeats lie at residues 174 to 178, 179 to 183, 184 to 188, 189 to 193, 196 to 198, and 199 to 201. The segment at 174 to 193 is 4 X 5 AA tandem repeats of Q-K-A-[PAS]-X; it reads QKAPAQKAPAQKAAGQKAAQ. Residues 196 to 201 are 2 X 3 AA tandem repeats of K-[GA]-Q; sequence KAQKGQ. N6-succinyllysine is present on Lys-207.

It belongs to the eukaryotic ribosomal protein eL14 family. As to quaternary structure, component of the large ribosomal subunit.

The protein localises to the cytoplasm. In terms of biological role, component of the large ribosomal subunit. The ribosome is a large ribonucleoprotein complex responsible for the synthesis of proteins in the cell. The sequence is that of Large ribosomal subunit protein eL14 (RPL14) from Oryctolagus cuniculus (Rabbit).